A 644-amino-acid chain; its full sequence is 3D-(3,5/4)-trihydroxycyclohexane-1,2-dione hydrolase (644 aa).

A thiamine diphosphate-binding site is contributed by E65. The segment at 442–522 (SLPGDLQRMW…INVLLFDNSG (81 aa)) is thiamine pyrophosphate binding. Mg(2+)-binding residues include D493 and N520.

It belongs to the TPP enzyme family. It depends on Mg(2+) as a cofactor. Thiamine diphosphate is required as a cofactor.

It carries out the reaction 3D-3,5/4-trihydroxycyclohexane-1,2-dione + H2O = 5-deoxy-D-glucuronate + H(+). It functions in the pathway polyol metabolism; myo-inositol degradation into acetyl-CoA; acetyl-CoA from myo-inositol: step 3/7. Functionally, involved in the cleavage of the C1-C2 bond of 3D-(3,5/4)-trihydroxycyclohexane-1,2-dione (THcHDO) to yield 5-deoxy-glucuronate (5DG). The protein is 3D-(3,5/4)-trihydroxycyclohexane-1,2-dione hydrolase of Bacillus cereus (strain AH820).